We begin with the raw amino-acid sequence, 122 residues long: Small ribosomal subunit protein uS13 (122 aa).

Positions Arg99–Lys122 are disordered.

The protein belongs to the universal ribosomal protein uS13 family. In terms of assembly, part of the 30S ribosomal subunit. Forms a loose heterodimer with protein S19. Forms two bridges to the 50S subunit in the 70S ribosome.

Functionally, located at the top of the head of the 30S subunit, it contacts several helices of the 16S rRNA. In the 70S ribosome it contacts the 23S rRNA (bridge B1a) and protein L5 of the 50S subunit (bridge B1b), connecting the 2 subunits; these bridges are implicated in subunit movement. Contacts the tRNAs in the A and P-sites. The protein is Small ribosomal subunit protein uS13 of Allorhizobium ampelinum (strain ATCC BAA-846 / DSM 112012 / S4) (Agrobacterium vitis (strain S4)).